The primary structure comprises 100 residues: Large ribosomal subunit protein uL23 (100 aa).

It belongs to the universal ribosomal protein uL23 family. Part of the 50S ribosomal subunit. Contacts protein L29, and trigger factor when it is bound to the ribosome.

One of the early assembly proteins it binds 23S rRNA. One of the proteins that surrounds the polypeptide exit tunnel on the outside of the ribosome. Forms the main docking site for trigger factor binding to the ribosome. This chain is Large ribosomal subunit protein uL23, found in Thermosynechococcus vestitus (strain NIES-2133 / IAM M-273 / BP-1).